Reading from the N-terminus, the 183-residue chain is Adenine phosphoribosyltransferase (183 aa).

It belongs to the purine/pyrimidine phosphoribosyltransferase family. Homodimer.

Its subcellular location is the cytoplasm. The catalysed reaction is AMP + diphosphate = 5-phospho-alpha-D-ribose 1-diphosphate + adenine. It functions in the pathway purine metabolism; AMP biosynthesis via salvage pathway; AMP from adenine: step 1/1. Its function is as follows. Catalyzes a salvage reaction resulting in the formation of AMP, that is energically less costly than de novo synthesis. This Salmonella heidelberg (strain SL476) protein is Adenine phosphoribosyltransferase.